Reading from the N-terminus, the 345-residue chain is Tropomodulin-4 (345 aa).

Residues 42-63 (NMLLPAGLRQRDQTKKSPTGPL) are disordered.

Belongs to the tropomodulin family. Binds to the N-terminus of tropomyosin and to actin.

The protein localises to the cytoplasm. It is found in the cytoskeleton. Its function is as follows. Blocks the elongation and depolymerization of the actin filaments at the pointed end. The Tmod/TM complex contributes to the formation of the short actin protofilament, which in turn defines the geometry of the membrane skeleton. This Bos taurus (Bovine) protein is Tropomodulin-4 (TMOD4).